A 457-amino-acid chain; its full sequence is Fibrinogen C domain-containing protein 1-A (457 aa).

Residues 1–20 (MGSDRWKNIGGTPQMEDSAQ) form a disordered region. The Cytoplasmic segment spans residues 1-33 (MGSDRWKNIGGTPQMEDSAQEKTQRKGCGYILC). A helical; Signal-anchor for type II membrane protein transmembrane segment spans residues 34 to 54 (TVLLSVAVLLAVTVTGAVLFM). Topologically, residues 55–457 (NHYHAPSTEP…MKIRPQREEN (403 aa)) are extracellular. Residues 216-235 (ADLQRAPSRNSRPRGCANGS) form a disordered region. The Fibrinogen C-terminal domain maps to 231 to 454 (CANGSKPRDC…FTEMKIRPQR (224 aa)). Asn233 carries an N-linked (GlcNAc...) asparagine glycan. The cysteines at positions 240 and 269 are disulfide-linked. Asn336 is a glycosylation site (N-linked (GlcNAc...) asparagine). Positions 389 and 391 each coordinate Ca(2+). Cys397 and Cys410 are joined by a disulfide.

In terms of assembly, homotetramer; disulfide-linked.

Its subcellular location is the membrane. Acetyl group-binding receptor which shows a calcium-dependent binding to acetylated structures such as chitin, some N-acetylated carbohydrates, and amino acids. This is Fibrinogen C domain-containing protein 1-A (fibcd1-a) from Xenopus laevis (African clawed frog).